An 867-amino-acid polypeptide reads, in one-letter code: Schizokinen transporter SchT (867 aa).

Residues 40-62 form a disordered region; sequence HPGKTQEAPSPTQLNTQSPAPNA. The segment covering 46 to 62 has biased composition (polar residues); sequence EAPSPTQLNTQSPAPNA. The TonB box signature appears at 185-192; that stretch reads IELVVTAT. The TBDR plug domain occupies 197–307; it reads PIQNVPRSIT…TGGVINIITR (111 aa). In terms of domain architecture, TBDR beta-barrel spans 313–867; the sequence is KLTSRTEVGV…TLSIKYSFDW (555 aa). The TonB C-terminal box signature appears at 850–867; that stretch reads AYAAARGRTLSIKYSFDW.

It belongs to the TonB-dependent receptor family.

The protein localises to the cell outer membrane. Its function is as follows. Involved in the TonB-dependent uptake of iron in complex with schizokinen, a dihydroxamate-type siderophore. The sequence is that of Schizokinen transporter SchT from Nostoc sp. (strain PCC 7120 / SAG 25.82 / UTEX 2576).